Consider the following 546-residue polypeptide: Alkaline phosphatase PafA (546 aa).

Positions M1 to A25 are cleaved as a signal peptide. Positions 38 and 79 each coordinate Zn(2+). The Phosphothreonine intermediate role is filled by T79. Substrate is bound by residues N100 and K162–R164. Zn(2+)-binding residues include D305, H309, D352, H353, and H486.

It depends on Zn(2+) as a cofactor.

It localises to the periplasm. The enzyme catalyses a phosphate monoester + H2O = an alcohol + phosphate. Its activity is regulated as follows. Strongly inhibited by orthovanadate and EDTA. Also inhibited by inorganic phosphate. Alkaline phosphatase with broad substrate specificity. Has phosphatase activity towards nucleotide phosphates with a preference for ATP. Active towards a great variety of phosphomonoesters with the exception of 2',3'-cyclic AMP and myo-inositol hexakisphosphate. The protein is Alkaline phosphatase PafA of Elizabethkingia meningoseptica (Chryseobacterium meningosepticum).